The chain runs to 259 residues: 3-oxo-5-alpha-steroid 4-dehydrogenase 1 (259 aa).

The next 5 helical transmembrane spans lie at 10–30 (LCLL…SIVG), 86–106 (VLLA…PVLI), 111–131 (PTLL…GYVQ), 146–166 (VTHP…VINI), and 206–226 (WCGF…LFTL).

The protein belongs to the steroid 5-alpha reductase family. As to expression, liver and prostate (at a low level).

The protein resides in the microsome membrane. Its subcellular location is the endoplasmic reticulum membrane. It catalyses the reaction a 3-oxo-5alpha-steroid + NADP(+) = a 3-oxo-Delta(4)-steroid + NADPH + H(+). The enzyme catalyses 5alpha-pregnane-3,20-dione + NADP(+) = progesterone + NADPH + H(+). The catalysed reaction is 17beta-hydroxy-5alpha-androstan-3-one + NADP(+) = testosterone + NADPH + H(+). It carries out the reaction androst-4-ene-3,17-dione + NADPH + H(+) = 5alpha-androstan-3,17-dione + NADP(+). Functionally, converts testosterone into 5-alpha-dihydrotestosterone and progesterone or corticosterone into their corresponding 5-alpha-3-oxosteroids. It plays a central role in sexual differentiation and androgen physiology. This chain is 3-oxo-5-alpha-steroid 4-dehydrogenase 1, found in Rattus norvegicus (Rat).